The chain runs to 494 residues: tRNA (guanine(37)-N(1))-methyltransferase (494 aa).

Residues methionine 1–threonine 32 constitute a mitochondrion transit peptide. Residues histidine 278, aspartate 316 to leucine 317, aspartate 344 to glycine 345, and asparagine 377 each bind S-adenosyl-L-methionine. Residues aspartate 468–serine 494 form a disordered region.

Belongs to the class I-like SAM-binding methyltransferase superfamily. TRM5/TYW2 family. Monomer.

It localises to the mitochondrion matrix. It is found in the nucleus. Its subcellular location is the cytoplasm. The catalysed reaction is guanosine(37) in tRNA + S-adenosyl-L-methionine = N(1)-methylguanosine(37) in tRNA + S-adenosyl-L-homocysteine + H(+). Involved in mitochondrial tRNA methylation. Specifically methylates the N1 position of guanosine-37 in various tRNAs. Methylation is not dependent on the nature of the nucleoside 5' of the target nucleoside. This is the first step in the biosynthesis of wybutosine (yW), a modified base adjacent to the anticodon of tRNAs and required for accurate decoding. The polypeptide is tRNA (guanine(37)-N(1))-methyltransferase (trmt5) (Xenopus tropicalis (Western clawed frog)).